A 377-amino-acid chain; its full sequence is Nuclear pore complex protein NUP54 (377 aa).

The segment covering 1-18 (MFGTPSSSPSFGTPSSTP) has biased composition (low complexity). The disordered stretch occupies residues 1 to 104 (MFGTPSSSPS…NTAQQQQQTP (104 aa)). Repeat copies occupy residues 2–3 (FG), 11–12 (FG), 20–21 (FG), 27–28 (FG), 36–37 (FG), 49–50 (FG), and 87–88 (FG). Positions 2–88 (FGTPSSSPSF…FQQQPSSNFG (87 aa)) are 7 X 2 AA repeats of F-G. Polar residues predominate over residues 19 to 32 (AFGTSSPAFGTPSA). The span at 39–104 (PSNPSFSSGG…NTAQQQQQTP (66 aa)) shows a compositional bias: low complexity.

The protein belongs to the NUP54 family. As to quaternary structure, part of the nuclear pore complex (NPC). The NPC has an eight-fold symmetrical structure comprising a central transport channel and two rings, the cytoplasmic and nuclear rings, to which eight filaments are attached. The cytoplasmic filaments have loose ends, while the nuclear filaments are joined in a distal ring, forming a nuclear basket. NPCs are highly dynamic in configuration and composition, and can be devided in 3 subcomplexes, the NUP62 subcomplex, the NUP107-160 subcomplex and the NUP93 subcomplex, containing approximately 30 different nucleoporin proteins.

The protein localises to the nucleus envelope. Its subcellular location is the nucleus. It localises to the nuclear pore complex. This chain is Nuclear pore complex protein NUP54, found in Arabidopsis thaliana (Mouse-ear cress).